The sequence spans 554 residues: Inactive serine/threonine-protein kinase/endoribonuclease IRE1-like (554 aa).

Residues 1-17 form the signal peptide; sequence MWLLAISLVGLLVVVVC. The interval 36–85 is disordered; sequence KRDKNSAPRVSASGEDGTKNEQVEKKSDPSGGLGEENEKTNSESKVLSVP. Basic and acidic residues predominate over residues 51 to 63; it reads DGTKNEQVEKKSD. One can recognise a Protein kinase domain in the interval 121–408; it reads LVSTNEMKYG…ATQVLLHPLF (288 aa). An ATP-binding site is contributed by K150. The KEN domain occupies 411–554; sequence SEKRLFFLRE…GEEAFEKYFN (144 aa).

It belongs to the protein kinase superfamily. Ser/Thr protein kinase family.

In Arabidopsis thaliana (Mouse-ear cress), this protein is Inactive serine/threonine-protein kinase/endoribonuclease IRE1-like.